Consider the following 784-residue polypeptide: PWWP domain-containing protein 2A (784 aa).

4 disordered regions span residues 1 to 32 (MAAV…LGRL), 244 to 272 (KPVE…PEDV), 463 to 567 (AKEK…EMQD), and 605 to 654 (SSSA…SSKE). A compositionally biased stretch (basic and acidic residues) spans 244–266 (KPVESIQEESKSFHEEPLVKSEE). A compositionally biased stretch (polar residues) spans 536–556 (TRYSATRSAGETPSEIQSPSN). The segment covering 605 to 614 (SSSASVCSSD) has biased composition (low complexity). The region spanning 684 to 744 (VGDIVWAKIY…LSQLTPFLEN (61 aa)) is the PWWP domain.

The protein resides in the nucleus. Its function is as follows. H2A.Z-specific chromatin binding protein which plays an important role in the neural crest cell differentiation and/or migration during early development and is essential for the development of the head and eye. Acts as an adapter between distinct nucleosome components (H3K36me3 or H2A.Z) and chromatin-modifying complexes, contributing to the regulation of the levels of histone acetylation at actively transcribed genes. The sequence is that of PWWP domain-containing protein 2A (pwwp2a) from Xenopus tropicalis (Western clawed frog).